The sequence spans 184 residues: MANKALILLAVLFCAQAVLGVTIVSKSEWGGRSATSKTSLASYLSYAVIHHTAGNYCSTKAACITQLKNIQAYHMDSLGWADIGYNFLIGGDGNVYEGRGWNVMGAHATNWNSKSIGISFLGNYNTNTLTSAQITAAKGLLSDAVSRGQIVSGYILYGHRQVGSTECPGTNIWNEIRTWSNWKA.

An N-terminal signal peptide occupies residues 1-20; sequence MANKALILLAVLFCAQAVLG. The N-acetylmuramoyl-L-alanine amidase domain occupies 45-169; the sequence is SYAVIHHTAG…RQVGSTECPG (125 aa). His-50 is a Zn(2+) binding site. Cys-57 and Cys-63 form a disulfide bridge. Residues His-159 and Cys-167 each coordinate Zn(2+).

The protein belongs to the N-acetylmuramoyl-L-alanine amidase 2 family. Zn(2+) serves as cofactor.

Its subcellular location is the secreted. It carries out the reaction Hydrolyzes the link between N-acetylmuramoyl residues and L-amino acid residues in certain cell-wall glycopeptides.. Functionally, N-acetylmuramyl-L-alanine amidase involved in innate immunity by degrading bacterial peptidoglycans (PGN). Probably plays a scavenger role by digesting biologically active PGN into biologically inactive fragments. Has no direct bacteriolytic activity. This is Peptidoglycan-recognition protein SC2 (PGRP-SC2) from Drosophila simulans (Fruit fly).